Consider the following 365-residue polypeptide: UDP-N-acetylglucosamine--N-acetylmuramyl-(pentapeptide) pyrophosphoryl-undecaprenol N-acetylglucosamine transferase (365 aa).

Residues 17-19, asparagine 129, arginine 167, serine 194, isoleucine 250, 269-274, and glutamine 295 each bind UDP-N-acetyl-alpha-D-glucosamine; these read TGG and ALTVSE.

Belongs to the glycosyltransferase 28 family. MurG subfamily.

It is found in the cell inner membrane. It carries out the reaction di-trans,octa-cis-undecaprenyl diphospho-N-acetyl-alpha-D-muramoyl-L-alanyl-D-glutamyl-meso-2,6-diaminopimeloyl-D-alanyl-D-alanine + UDP-N-acetyl-alpha-D-glucosamine = di-trans,octa-cis-undecaprenyl diphospho-[N-acetyl-alpha-D-glucosaminyl-(1-&gt;4)]-N-acetyl-alpha-D-muramoyl-L-alanyl-D-glutamyl-meso-2,6-diaminopimeloyl-D-alanyl-D-alanine + UDP + H(+). It functions in the pathway cell wall biogenesis; peptidoglycan biosynthesis. In terms of biological role, cell wall formation. Catalyzes the transfer of a GlcNAc subunit on undecaprenyl-pyrophosphoryl-MurNAc-pentapeptide (lipid intermediate I) to form undecaprenyl-pyrophosphoryl-MurNAc-(pentapeptide)GlcNAc (lipid intermediate II). The sequence is that of UDP-N-acetylglucosamine--N-acetylmuramyl-(pentapeptide) pyrophosphoryl-undecaprenol N-acetylglucosamine transferase from Shewanella violacea (strain JCM 10179 / CIP 106290 / LMG 19151 / DSS12).